The primary structure comprises 144 residues: Universal stress protein F (144 aa).

Belongs to the universal stress protein A family. In terms of assembly, homodimer.

The sequence is that of Universal stress protein F (uspF) from Escherichia coli O157:H7.